The chain runs to 81 residues: MIQMALATEKALKLIESYNTLTLIVDKSDTKDDIKKSVERLFNVKVVKVNVVITPQGYKKAYVKLAPEYKASDIAHKLGIF.

This sequence belongs to the universal ribosomal protein uL23 family. In terms of assembly, part of the 50S ribosomal subunit. Contacts protein L29.

Binds to 23S rRNA. One of the proteins that surrounds the polypeptide exit tunnel on the outside of the ribosome. The protein is Large ribosomal subunit protein uL23 of Saccharolobus solfataricus (strain ATCC 35092 / DSM 1617 / JCM 11322 / P2) (Sulfolobus solfataricus).